Here is a 447-residue protein sequence, read N- to C-terminus: N-succinylarginine dihydrolase (447 aa).

Residues 19–28, Asn110, and 137–138 each bind substrate; these read AGLSFGNEAS and HR. Glu174 is a catalytic residue. Residue Arg212 coordinates substrate. The active site involves His248. Substrate contacts are provided by Asp250 and Asn359. The active-site Nucleophile is the Cys365.

It belongs to the succinylarginine dihydrolase family. Homodimer.

It catalyses the reaction N(2)-succinyl-L-arginine + 2 H2O + 2 H(+) = N(2)-succinyl-L-ornithine + 2 NH4(+) + CO2. The protein operates within amino-acid degradation; L-arginine degradation via AST pathway; L-glutamate and succinate from L-arginine: step 2/5. Its function is as follows. Catalyzes the hydrolysis of N(2)-succinylarginine into N(2)-succinylornithine, ammonia and CO(2). The protein is N-succinylarginine dihydrolase of Citrobacter koseri (strain ATCC BAA-895 / CDC 4225-83 / SGSC4696).